Reading from the N-terminus, the 230-residue chain is MVITNPIVYGKFIKRINRFEAYVELNSGEKTLVHVPNTGRCKEIFVPGAEVILEVRDRQGRKTPYELAFAYKGKRLISIDSQVPNKVVLESIKMGLIEEFKGYDIVEKEKTFGNSKFDIKLTKGKEICYVEVKGVTLEVEGVAKFPDAPTERGRKHLKELIKVKKEGMRAAVIFLIQMDDIKYFTPNDEQDPEFGKFLREAVGKGVEAYAYTCDVGENYVFLKDRVEVVL.

It belongs to the SfsA family.

The polypeptide is Sugar fermentation stimulation protein homolog (Thermoanaerobacter pseudethanolicus (strain ATCC 33223 / 39E) (Clostridium thermohydrosulfuricum)).